A 493-amino-acid polypeptide reads, in one-letter code: Putative lon protease homolog (493 aa).

G52–S59 serves as a coordination point for ATP.

Belongs to the peptidase S16 family.

This is Putative lon protease homolog from Thermoplasma acidophilum (strain ATCC 25905 / DSM 1728 / JCM 9062 / NBRC 15155 / AMRC-C165).